The chain runs to 300 residues: 4-hydroxy-tetrahydrodipicolinate synthase (300 aa).

Residue Thr-45 participates in pyruvate binding. Tyr-140 serves as the catalytic Proton donor/acceptor. Lys-169 functions as the Schiff-base intermediate with substrate in the catalytic mechanism. Ile-210 is a binding site for pyruvate.

It belongs to the DapA family. Homotetramer; dimer of dimers.

It localises to the cytoplasm. The catalysed reaction is L-aspartate 4-semialdehyde + pyruvate = (2S,4S)-4-hydroxy-2,3,4,5-tetrahydrodipicolinate + H2O + H(+). It participates in amino-acid biosynthesis; L-lysine biosynthesis via DAP pathway; (S)-tetrahydrodipicolinate from L-aspartate: step 3/4. Catalyzes the condensation of (S)-aspartate-beta-semialdehyde [(S)-ASA] and pyruvate to 4-hydroxy-tetrahydrodipicolinate (HTPA). This is 4-hydroxy-tetrahydrodipicolinate synthase from Helicobacter pylori (strain Shi470).